A 240-amino-acid chain; its full sequence is MRIDVLTLFPEMFSIFNHSIIGKAIEKEILKINTVNIRDYTIDKHKKVDDYPYGGGAGMVMAAQPIVDAIKTVKKENKGKVIFLGPKGKTFNQNLAKELAKEEELIFLCGHYEGIDERAYEYIDMEISLGDFVLTGGEMACIPIVDSICRLVDGVLKSSESYEDESFYNGLLEYPQYTRPAIYEGKSVPEVLLSGHHENIKKWRKAKSLIITNKVRPDLFKKYKLTEEDKKILKDFNKKL.

S-adenosyl-L-methionine contacts are provided by residues G110 and 129 to 134 (LGDFVL).

It belongs to the RNA methyltransferase TrmD family. As to quaternary structure, homodimer.

It localises to the cytoplasm. It catalyses the reaction guanosine(37) in tRNA + S-adenosyl-L-methionine = N(1)-methylguanosine(37) in tRNA + S-adenosyl-L-homocysteine + H(+). Its function is as follows. Specifically methylates guanosine-37 in various tRNAs. The polypeptide is tRNA (guanine-N(1)-)-methyltransferase (Clostridium botulinum (strain Kyoto / Type A2)).